The chain runs to 253 residues: 5'/3'-nucleotidase SurE (253 aa).

A divalent metal cation is bound by residues aspartate 8, aspartate 9, serine 39, and asparagine 92.

The protein belongs to the SurE nucleotidase family. It depends on a divalent metal cation as a cofactor.

The protein localises to the cytoplasm. It catalyses the reaction a ribonucleoside 5'-phosphate + H2O = a ribonucleoside + phosphate. It carries out the reaction a ribonucleoside 3'-phosphate + H2O = a ribonucleoside + phosphate. The enzyme catalyses [phosphate](n) + H2O = [phosphate](n-1) + phosphate + H(+). Functionally, nucleotidase with a broad substrate specificity as it can dephosphorylate various ribo- and deoxyribonucleoside 5'-monophosphates and ribonucleoside 3'-monophosphates with highest affinity to 3'-AMP. Also hydrolyzes polyphosphate (exopolyphosphatase activity) with the preference for short-chain-length substrates (P20-25). Might be involved in the regulation of dNTP and NTP pools, and in the turnover of 3'-mononucleotides produced by numerous intracellular RNases (T1, T2, and F) during the degradation of various RNAs. The sequence is that of 5'/3'-nucleotidase SurE from Escherichia fergusonii (strain ATCC 35469 / DSM 13698 / CCUG 18766 / IAM 14443 / JCM 21226 / LMG 7866 / NBRC 102419 / NCTC 12128 / CDC 0568-73).